The sequence spans 137 residues: ATP synthase epsilon chain, chloroplastic (137 aa).

Belongs to the ATPase epsilon chain family. In terms of assembly, F-type ATPases have 2 components, CF(1) - the catalytic core - and CF(0) - the membrane proton channel. CF(1) has five subunits: alpha(3), beta(3), gamma(1), delta(1), epsilon(1). CF(0) has three main subunits: a, b and c.

The protein localises to the plastid. It is found in the chloroplast thylakoid membrane. In terms of biological role, produces ATP from ADP in the presence of a proton gradient across the membrane. This Sorghum bicolor (Sorghum) protein is ATP synthase epsilon chain, chloroplastic.